The sequence spans 159 residues: Transcription elongation factor GreA (159 aa).

The stretch at 7–72 forms a coiled coil; that stretch reads MTVRGAEKLR…IQEIESKLSN (66 aa).

The protein belongs to the GreA/GreB family.

Functionally, necessary for efficient RNA polymerase transcription elongation past template-encoded arresting sites. The arresting sites in DNA have the property of trapping a certain fraction of elongating RNA polymerases that pass through, resulting in locked ternary complexes. Cleavage of the nascent transcript by cleavage factors such as GreA or GreB allows the resumption of elongation from the new 3'terminus. GreA releases sequences of 2 to 3 nucleotides. This chain is Transcription elongation factor GreA, found in Buchnera aphidicola subsp. Schizaphis graminum (strain Sg).